Reading from the N-terminus, the 723-residue chain is Threonine--tRNA ligase 1, cytoplasmic (723 aa).

Positions 1 to 10 (MSEEQASSPS) are enriched in polar residues. The interval 1 to 49 (MSEEQASSPSAKMGDEEKPVGAGEEKQKEGSKKKNKEGSGDGGRAELNP) is disordered. Over residues 13–39 (MGDEEKPVGAGEEKQKEGSKKKNKEGS) the composition is skewed to basic and acidic residues. Position 39 is a phosphoserine (Ser39). The TGS domain maps to 79-143 (DSKPIKVTLP…EEDCTLELLK (65 aa)). The residue at position 243 (Lys243) is an N6-acetyllysine. Thr246 carries the post-translational modification Phosphothreonine. Tyr298 bears the Phosphotyrosine mark. At Thr453 the chain carries Phosphothreonine. Ser702 carries the post-translational modification Phosphoserine.

It belongs to the class-II aminoacyl-tRNA synthetase family. Homodimer. In terms of processing, ISGylated.

The protein resides in the cytoplasm. The enzyme catalyses tRNA(Thr) + L-threonine + ATP = L-threonyl-tRNA(Thr) + AMP + diphosphate + H(+). Functionally, catalyzes the attachment of threonine to tRNA(Thr) in a two-step reaction: threonine is first activated by ATP to form Thr-AMP and then transferred to the acceptor end of tRNA(Thr). Also edits incorrectly charged tRNA(Thr) via its editing domain, at the post-transfer stage. This Bos taurus (Bovine) protein is Threonine--tRNA ligase 1, cytoplasmic (TARS1).